Consider the following 430-residue polypeptide: Trigger factor (430 aa).

In terms of domain architecture, PPIase FKBP-type spans 157 to 242; that stretch reads GDLVALETWS…AVEVSEPVLP (86 aa).

It belongs to the FKBP-type PPIase family. Tig subfamily.

The protein resides in the cytoplasm. The enzyme catalyses [protein]-peptidylproline (omega=180) = [protein]-peptidylproline (omega=0). Involved in protein export. Acts as a chaperone by maintaining the newly synthesized protein in an open conformation. Functions as a peptidyl-prolyl cis-trans isomerase. This is Trigger factor from Xanthomonas campestris pv. campestris (strain ATCC 33913 / DSM 3586 / NCPPB 528 / LMG 568 / P 25).